The sequence spans 297 residues: Protoheme IX farnesyltransferase 1 (297 aa).

The next 9 helical transmembrane spans lie at 23-43 (VVVLMLITSLVGMFLATRAGV), 45-65 (WSVLLFGNLGIALCAGGAAAV), 93-113 (LPALLFALALALLGMALLLMF), 117-137 (LTAWLTLASLLGYAVLYTGFL), 145-165 (IVIGGLAGAAPPLLGWVAVSG), 171-191 (PLLLVLIIFAWTPPHFWALAI), 216-236 (LHILLYTLILLAVTLLPYAIH), 241-261 (LYLVCALALGLRFLQWAWVLY), and 277-297 (IGYLFALFIALLVDHYLLLNL).

It belongs to the UbiA prenyltransferase family. Protoheme IX farnesyltransferase subfamily.

Its subcellular location is the cell inner membrane. The enzyme catalyses heme b + (2E,6E)-farnesyl diphosphate + H2O = Fe(II)-heme o + diphosphate. It functions in the pathway porphyrin-containing compound metabolism; heme O biosynthesis; heme O from protoheme: step 1/1. In terms of biological role, converts heme B (protoheme IX) to heme O by substitution of the vinyl group on carbon 2 of heme B porphyrin ring with a hydroxyethyl farnesyl side group. The sequence is that of Protoheme IX farnesyltransferase 1 from Pseudomonas putida (strain W619).